Here is a 125-residue protein sequence, read N- to C-terminus: Large ribosomal subunit protein bL12 (125 aa).

The protein belongs to the bacterial ribosomal protein bL12 family. In terms of assembly, homodimer. Part of the ribosomal stalk of the 50S ribosomal subunit. Forms a multimeric L10(L12)X complex, where L10 forms an elongated spine to which 2 to 4 L12 dimers bind in a sequential fashion. Binds GTP-bound translation factors.

Functionally, forms part of the ribosomal stalk which helps the ribosome interact with GTP-bound translation factors. Is thus essential for accurate translation. This Porphyromonas gingivalis (strain ATCC 33277 / DSM 20709 / CIP 103683 / JCM 12257 / NCTC 11834 / 2561) protein is Large ribosomal subunit protein bL12.